A 612-amino-acid polypeptide reads, in one-letter code: Dihydroxy-acid dehydratase (612 aa).

Aspartate 81 contributes to the Mg(2+) binding site. Cysteine 122 contributes to the [2Fe-2S] cluster binding site. 2 residues coordinate Mg(2+): aspartate 123 and lysine 124. The residue at position 124 (lysine 124) is an N6-carboxylysine. Cysteine 195 serves as a coordination point for [2Fe-2S] cluster. Glutamate 491 contributes to the Mg(2+) binding site. Serine 517 functions as the Proton acceptor in the catalytic mechanism.

It belongs to the IlvD/Edd family. As to quaternary structure, homodimer. It depends on [2Fe-2S] cluster as a cofactor. Requires Mg(2+) as cofactor.

The enzyme catalyses (2R)-2,3-dihydroxy-3-methylbutanoate = 3-methyl-2-oxobutanoate + H2O. The catalysed reaction is (2R,3R)-2,3-dihydroxy-3-methylpentanoate = (S)-3-methyl-2-oxopentanoate + H2O. It functions in the pathway amino-acid biosynthesis; L-isoleucine biosynthesis; L-isoleucine from 2-oxobutanoate: step 3/4. It participates in amino-acid biosynthesis; L-valine biosynthesis; L-valine from pyruvate: step 3/4. Functionally, functions in the biosynthesis of branched-chain amino acids. Catalyzes the dehydration of (2R,3R)-2,3-dihydroxy-3-methylpentanoate (2,3-dihydroxy-3-methylvalerate) into 2-oxo-3-methylpentanoate (2-oxo-3-methylvalerate) and of (2R)-2,3-dihydroxy-3-methylbutanoate (2,3-dihydroxyisovalerate) into 2-oxo-3-methylbutanoate (2-oxoisovalerate), the penultimate precursor to L-isoleucine and L-valine, respectively. This is Dihydroxy-acid dehydratase from Rhizobium meliloti (strain 1021) (Ensifer meliloti).